Consider the following 198-residue polypeptide: Recombination protein RecR (198 aa).

The segment at 57–72 (CEKCNTFTEAQICEVC) adopts a C4-type zinc-finger fold. A Toprim domain is found at 80–175 (TLLCVVETPA…AVTRLARGVP (96 aa)).

This sequence belongs to the RecR family.

Its function is as follows. May play a role in DNA repair. It seems to be involved in an RecBC-independent recombinational process of DNA repair. It may act with RecF and RecO. This Burkholderia ambifaria (strain MC40-6) protein is Recombination protein RecR.